Consider the following 398-residue polypeptide: CCA-adding enzyme (398 aa).

The ATP site is built by G32 and R35. CTP contacts are provided by G32 and R35. Mg(2+)-binding residues include D45 and D47. ATP-binding residues include R116, D159, R162, R165, and R168. 5 residues coordinate CTP: R116, D159, R162, R165, and R168.

This sequence belongs to the tRNA nucleotidyltransferase/poly(A) polymerase family. Bacterial CCA-adding enzyme type 3 subfamily. As to quaternary structure, homodimer. Mg(2+) serves as cofactor.

The catalysed reaction is a tRNA precursor + 2 CTP + ATP = a tRNA with a 3' CCA end + 3 diphosphate. The enzyme catalyses a tRNA with a 3' CCA end + 2 CTP + ATP = a tRNA with a 3' CCACCA end + 3 diphosphate. Its function is as follows. Catalyzes the addition and repair of the essential 3'-terminal CCA sequence in tRNAs without using a nucleic acid template. Adds these three nucleotides in the order of C, C, and A to the tRNA nucleotide-73, using CTP and ATP as substrates and producing inorganic pyrophosphate. tRNA 3'-terminal CCA addition is required both for tRNA processing and repair. Also involved in tRNA surveillance by mediating tandem CCA addition to generate a CCACCA at the 3' terminus of unstable tRNAs. While stable tRNAs receive only 3'-terminal CCA, unstable tRNAs are marked with CCACCA and rapidly degraded. The protein is CCA-adding enzyme of Lactobacillus gasseri (strain ATCC 33323 / DSM 20243 / BCRC 14619 / CIP 102991 / JCM 1131 / KCTC 3163 / NCIMB 11718 / NCTC 13722 / AM63).